We begin with the raw amino-acid sequence, 150 residues long: Arginine repressor (150 aa).

This sequence belongs to the ArgR family.

It localises to the cytoplasm. Its pathway is amino-acid biosynthesis; L-arginine biosynthesis [regulation]. Regulates arginine biosynthesis genes. The sequence is that of Arginine repressor from Staphylococcus carnosus (strain TM300).